Consider the following 287-residue polypeptide: Beta-lactamase GES-2 (287 aa).

An N-terminal signal peptide occupies residues 1–18 (MRFIHALLLAGIAHSAYA). Cysteine 63 and cysteine 233 form a disulfide bridge. Catalysis depends on serine 64, which acts as the Nucleophile; acyl-ester intermediate. A beta-lactam is bound by residues lysine 67, serine 125, and glutamate 161.

The protein belongs to the class-A beta-lactamase family.

The enzyme catalyses a beta-lactam + H2O = a substituted beta-amino acid. Inhibited by the beta-lactamase-blocking agents clavulanic acid, sulbactam and tazobactam. Extended-spectrum beta-lactamase (ESBL) which confers resistance to penicillins, as well as first, third and fourth-generation cephalosporins. Has modest carbapenem-hydrolyzing activity. Has cefotaxime-hydrolyzing activity. The polypeptide is Beta-lactamase GES-2 (Pseudomonas aeruginosa).